The following is a 349-amino-acid chain: Protein RecA (349 aa).

An ATP-binding site is contributed by 65–72 (GPESSGKT).

Belongs to the RecA family.

It is found in the cytoplasm. Its function is as follows. Can catalyze the hydrolysis of ATP in the presence of single-stranded DNA, the ATP-dependent uptake of single-stranded DNA by duplex DNA, and the ATP-dependent hybridization of homologous single-stranded DNAs. It interacts with LexA causing its activation and leading to its autocatalytic cleavage. This Enterococcus faecium (Streptococcus faecium) protein is Protein RecA.